The sequence spans 417 residues: NADH-quinone oxidoreductase subunit D 2 (417 aa).

The protein belongs to the complex I 49 kDa subunit family. As to quaternary structure, NDH-1 is composed of 14 different subunits. Subunits NuoB, C, D, E, F, and G constitute the peripheral sector of the complex.

The protein resides in the cell membrane. The enzyme catalyses a quinone + NADH + 5 H(+)(in) = a quinol + NAD(+) + 4 H(+)(out). In terms of biological role, NDH-1 shuttles electrons from NADH, via FMN and iron-sulfur (Fe-S) centers, to quinones in the respiratory chain. The immediate electron acceptor for the enzyme in this species is believed to be ubiquinone. Couples the redox reaction to proton translocation (for every two electrons transferred, four hydrogen ions are translocated across the cytoplasmic membrane), and thus conserves the redox energy in a proton gradient. The polypeptide is NADH-quinone oxidoreductase subunit D 2 (Roseiflexus sp. (strain RS-1)).